We begin with the raw amino-acid sequence, 58 residues long: MSPQTETKASVGFKAGVKDYKLTYYTPDYETKDTDILAAFRVSPQPGVPPEEAGAAVA.

The propeptide occupies 1–2; the sequence is MS. P3 is subject to N-acetylproline. At K14 the chain carries N6,N6,N6-trimethyllysine.

This sequence belongs to the RuBisCO large chain family. Type I subfamily. Heterohexadecamer of 8 large chains and 8 small chains.

It is found in the plastid. The protein resides in the chloroplast. The enzyme catalyses 2 (2R)-3-phosphoglycerate + 2 H(+) = D-ribulose 1,5-bisphosphate + CO2 + H2O. The catalysed reaction is D-ribulose 1,5-bisphosphate + O2 = 2-phosphoglycolate + (2R)-3-phosphoglycerate + 2 H(+). Functionally, ruBisCO catalyzes two reactions: the carboxylation of D-ribulose 1,5-bisphosphate, the primary event in carbon dioxide fixation, as well as the oxidative fragmentation of the pentose substrate in the photorespiration process. Both reactions occur simultaneously and in competition at the same active site. The protein is Ribulose bisphosphate carboxylase large chain (rbcL) of Weinmannia silvicola (Towai).